The primary structure comprises 496 residues: Glutamyl-tRNA(Gln) amidotransferase subunit A (496 aa).

Catalysis depends on charge relay system residues Lys75 and Ser150. Residue Ser174 is the Acyl-ester intermediate of the active site.

This sequence belongs to the amidase family. GatA subfamily. Heterotrimer of A, B and C subunits.

It catalyses the reaction L-glutamyl-tRNA(Gln) + L-glutamine + ATP + H2O = L-glutaminyl-tRNA(Gln) + L-glutamate + ADP + phosphate + H(+). Functionally, allows the formation of correctly charged Gln-tRNA(Gln) through the transamidation of misacylated Glu-tRNA(Gln) in organisms which lack glutaminyl-tRNA synthetase. The reaction takes place in the presence of glutamine and ATP through an activated gamma-phospho-Glu-tRNA(Gln). In Burkholderia pseudomallei (strain 1106a), this protein is Glutamyl-tRNA(Gln) amidotransferase subunit A.